We begin with the raw amino-acid sequence, 502 residues long: Probable malate:quinone oxidoreductase (502 aa).

Belongs to the MQO family. FAD serves as cofactor.

The catalysed reaction is (S)-malate + a quinone = a quinol + oxaloacetate. It functions in the pathway carbohydrate metabolism; tricarboxylic acid cycle; oxaloacetate from (S)-malate (quinone route): step 1/1. This chain is Probable malate:quinone oxidoreductase, found in Synechococcus sp. (strain CC9605).